The following is a 293-amino-acid chain: Energy-coupling factor transporter ATP-binding protein EcfA2 (293 aa).

An ABC transporter domain is found at 3–246 (ITFQKVEHRY…ADELEKIGVD (244 aa)). Residue 40–47 (GHTGSGKS) coordinates ATP.

The protein belongs to the ABC transporter superfamily. Energy-coupling factor EcfA family. As to quaternary structure, forms a stable energy-coupling factor (ECF) transporter complex composed of 2 membrane-embedded substrate-binding proteins (S component), 2 ATP-binding proteins (A component) and 2 transmembrane proteins (T component).

Its subcellular location is the cell membrane. ATP-binding (A) component of a common energy-coupling factor (ECF) ABC-transporter complex. Unlike classic ABC transporters this ECF transporter provides the energy necessary to transport a number of different substrates. The chain is Energy-coupling factor transporter ATP-binding protein EcfA2 from Bacillus thuringiensis (strain Al Hakam).